The chain runs to 816 residues: Auxin response factor 12 (816 aa).

Positions 1 to 10 are enriched in low complexity; that stretch reads MSSSSAASIG. The disordered stretch occupies residues 1–24; sequence MSSSSAASIGPPQPPPPPAPPEEE. Pro residues predominate over residues 11–20; that stretch reads PPQPPPPPAP. The segment at residues 135 to 237 is a DNA-binding region (TF-B3); it reads FCKTLTASDT…QLLLGIRRAS (103 aa). Positions 526–565 are disordered; that stretch reads NDQKQKIQPDQSYQVPTSAVLPSPTSLPSHLREKFGFSDP. The PB1 domain maps to 717–801; sequence RTFVKVYKSG…WYIKILSPED (85 aa).

The protein belongs to the ARF family. As to quaternary structure, homodimers and heterodimers.

The protein resides in the nucleus. In terms of biological role, auxin response factors (ARFs) are transcriptional factors that bind specifically to the DNA sequence 5'-TGTCTC-3' found in the auxin-responsive promoter elements (AuxREs). The polypeptide is Auxin response factor 12 (ARF12) (Oryza sativa subsp. indica (Rice)).